The chain runs to 1083 residues: uncharacterized protein (1083 aa).

Residues Ser93–Ser145 are disordered. Residues Ser108–Ser145 are compositionally biased toward low complexity.

The protein localises to the virion. This is an uncharacterized protein from Acanthamoeba polyphaga (Amoeba).